The following is a 40-amino-acid chain: Large ribosomal subunit protein bL36A (40 aa).

It belongs to the bacterial ribosomal protein bL36 family.

This Paenarthrobacter aurescens (strain TC1) protein is Large ribosomal subunit protein bL36A.